A 304-amino-acid chain; its full sequence is Quinolinate synthase (304 aa).

2 residues coordinate iminosuccinate: His23 and Ser40. Position 86 (Cys86) interacts with [4Fe-4S] cluster. Iminosuccinate is bound by residues 112–114 and Ser129; that span reads YVN. Position 173 (Cys173) interacts with [4Fe-4S] cluster. Iminosuccinate is bound by residues 199 to 201 and Thr216; that span reads HPE. Residue Cys260 participates in [4Fe-4S] cluster binding.

This sequence belongs to the quinolinate synthase family. Type 2 subfamily. It depends on [4Fe-4S] cluster as a cofactor.

It localises to the cytoplasm. The catalysed reaction is iminosuccinate + dihydroxyacetone phosphate = quinolinate + phosphate + 2 H2O + H(+). The protein operates within cofactor biosynthesis; NAD(+) biosynthesis; quinolinate from iminoaspartate: step 1/1. In terms of biological role, catalyzes the condensation of iminoaspartate with dihydroxyacetone phosphate to form quinolinate. In Methanothermobacter thermautotrophicus (strain ATCC 29096 / DSM 1053 / JCM 10044 / NBRC 100330 / Delta H) (Methanobacterium thermoautotrophicum), this protein is Quinolinate synthase.